A 234-amino-acid polypeptide reads, in one-letter code: Orotate phosphoribosyltransferase (234 aa).

5-phospho-alpha-D-ribose 1-diphosphate is bound at residue K37. F45–F46 is a binding site for orotate. 5-phospho-alpha-D-ribose 1-diphosphate contacts are provided by residues Y83–K84, R109, K110, K113, H115, and D134–S142. Orotate-binding residues include S138 and R166.

Belongs to the purine/pyrimidine phosphoribosyltransferase family. PyrE subfamily. As to quaternary structure, homodimer. The cofactor is Mg(2+).

It catalyses the reaction orotidine 5'-phosphate + diphosphate = orotate + 5-phospho-alpha-D-ribose 1-diphosphate. Its pathway is pyrimidine metabolism; UMP biosynthesis via de novo pathway; UMP from orotate: step 1/2. In terms of biological role, catalyzes the transfer of a ribosyl phosphate group from 5-phosphoribose 1-diphosphate to orotate, leading to the formation of orotidine monophosphate (OMP). This is Orotate phosphoribosyltransferase from Methylibium petroleiphilum (strain ATCC BAA-1232 / LMG 22953 / PM1).